Here is a 340-residue protein sequence, read N- to C-terminus: Ketol-acid reductoisomerase (NADP(+)) (340 aa).

Positions 1–182 constitute a KARI N-terminal Rossmann domain; sequence MRVYYDRDCD…GGGRSGIIET (182 aa). Residues 24-27, Arg48, Ser51, Ser53, and 83-86 contribute to the NADP(+) site; these read YGSQ and DELQ. The active site involves His108. Gly134 is a binding site for NADP(+). Residues 183–329 form the KARI C-terminal knotted domain; it reads NFREECETDL…KELRGMMPWI (147 aa). Asp191, Glu195, Glu227, and Glu231 together coordinate Mg(2+). A substrate-binding site is contributed by Ser252.

The protein belongs to the ketol-acid reductoisomerase family. It depends on Mg(2+) as a cofactor.

It catalyses the reaction (2R)-2,3-dihydroxy-3-methylbutanoate + NADP(+) = (2S)-2-acetolactate + NADPH + H(+). It carries out the reaction (2R,3R)-2,3-dihydroxy-3-methylpentanoate + NADP(+) = (S)-2-ethyl-2-hydroxy-3-oxobutanoate + NADPH + H(+). It participates in amino-acid biosynthesis; L-isoleucine biosynthesis; L-isoleucine from 2-oxobutanoate: step 2/4. It functions in the pathway amino-acid biosynthesis; L-valine biosynthesis; L-valine from pyruvate: step 2/4. Its function is as follows. Involved in the biosynthesis of branched-chain amino acids (BCAA). Catalyzes an alkyl-migration followed by a ketol-acid reduction of (S)-2-acetolactate (S2AL) to yield (R)-2,3-dihydroxy-isovalerate. In the isomerase reaction, S2AL is rearranged via a Mg-dependent methyl migration to produce 3-hydroxy-3-methyl-2-ketobutyrate (HMKB). In the reductase reaction, this 2-ketoacid undergoes a metal-dependent reduction by NADPH to yield (R)-2,3-dihydroxy-isovalerate. In Dinoroseobacter shibae (strain DSM 16493 / NCIMB 14021 / DFL 12), this protein is Ketol-acid reductoisomerase (NADP(+)).